The chain runs to 624 residues: MRWVKLGRRVIMSRALSSRLNLELGNKLKGLVSDQFYDEALRLYKLKIHSLGTNGFTAILPSVIKACAFQQEPFLLGAQLHCLCLKAGADCDTVVSNSLISMYAKFSRKYAVRKVFDEMLHRDTVSYCSIINSCCQDGLLYEAMKLIKEMYFYGFIPKSELVASLLALCTRMGSSSKVARMFHALVLVDERMQESVLLSTALVDMYLKFDDHAAAFHVFDQMEVKNEVSWTAMISGCVANQNYEMGVDLFRAMQRENLRPNRVTLLSVLPACVELNYGSSLVKEIHGFSFRHGCHADERLTAAFMTMYCRCGNVSLSRVLFETSKVRDVVMWSSMISGYAETGDCSEVMNLLNQMRKEGIEANSVTLLAIVSACTNSTLLSFASTVHSQILKCGFMSHILLGNALIDMYAKCGSLSAAREVFYELTEKDLVSWSSMINAYGLHGHGSEALEIFKGMIKGGHEVDDMAFLAILSACNHAGLVEEAQTIFTQAGKYHMPVTLEHYACYINLLGRFGKIDDAFEVTINMPMKPSARIWSSLLSACETHGRLDVAGKIIANELMKSEPDNPANYVLLSKIHTESGNYHAAEEVRRVMQRRKLNKCYGFSKIEPELQIEDYQGKSWSPI.

A mitochondrion-targeting transit peptide spans 1–15 (MRWVKLGRRVIMSRA). 14 PPR repeats span residues 56–91 (FTAILPSVIKACAFQQEPFLLGAQLHCLCLKAGADC), 92–122 (DTVVSNSLISMYAKFSRKYAVRKVFDEMLHR), 123–157 (DTVSYCSIINSCCQDGLLYEAMKLIKEMYFYGFIP), 158–192 (KSELVASLLALCTRMGSSSKVARMFHALVLVDERM), 195–225 (SVLLSTALVDMYLKFDDHAAAFHVFDQMEVK), 226–260 (NEVSWTAMISGCVANQNYEMGVDLFRAMQRENLRP), 261–296 (NRVTLLSVLPACVELNYGSSLVKEIHGFSFRHGCHA), 297–327 (DERLTAAFMTMYCRCGNVSLSRVLFETSKVR), 328–362 (DVVMWSSMISGYAETGDCSEVMNLLNQMRKEGIEA), 363–397 (NSVTLLAIVSACTNSTLLSFASTVHSQILKCGFMS), 398–428 (HILLGNALIDMYAKCGSLSAAREVFYELTEK), 429–463 (DLVSWSSMINAYGLHGHGSEALEIFKGMIKGGHEV), 464–498 (DDMAFLAILSACNHAGLVEEAQTIFTQAGKYHMPV), and 499–529 (TLEHYACYINLLGRFGKIDDAFEVTINMPMK). Residues 534–610 (IWSSLLSACE…CYGFSKIEPE (77 aa)) are type E motif.

Belongs to the PPR family. PCMP-E subfamily.

The protein localises to the mitochondrion. The sequence is that of Pentatricopeptide repeat-containing protein At4g31070, mitochondrial (PCMP-E7) from Arabidopsis thaliana (Mouse-ear cress).